The chain runs to 203 residues: Holliday junction branch migration complex subunit RuvA (203 aa).

The interval 1–64 (MIGRLNGILV…EDAQLLYGFI (64 aa)) is domain I. The tract at residues 65 to 143 (TKQERALFRL…SLLEASVGNE (79 aa)) is domain II. The interval 144–154 (REFMLQTNYTA) is flexible linker. Residues 155–203 (PAANAEEDAISALVSLGYKPPQASRAVSKAYKEGMDTETLIKLALKSML) form a domain III region.

Belongs to the RuvA family. In terms of assembly, homotetramer. Forms an RuvA(8)-RuvB(12)-Holliday junction (HJ) complex. HJ DNA is sandwiched between 2 RuvA tetramers; dsDNA enters through RuvA and exits via RuvB. An RuvB hexamer assembles on each DNA strand where it exits the tetramer. Each RuvB hexamer is contacted by two RuvA subunits (via domain III) on 2 adjacent RuvB subunits; this complex drives branch migration. In the full resolvosome a probable DNA-RuvA(4)-RuvB(12)-RuvC(2) complex forms which resolves the HJ.

The protein resides in the cytoplasm. The RuvA-RuvB-RuvC complex processes Holliday junction (HJ) DNA during genetic recombination and DNA repair, while the RuvA-RuvB complex plays an important role in the rescue of blocked DNA replication forks via replication fork reversal (RFR). RuvA specifically binds to HJ cruciform DNA, conferring on it an open structure. The RuvB hexamer acts as an ATP-dependent pump, pulling dsDNA into and through the RuvAB complex. HJ branch migration allows RuvC to scan DNA until it finds its consensus sequence, where it cleaves and resolves the cruciform DNA. The polypeptide is Holliday junction branch migration complex subunit RuvA (Shewanella denitrificans (strain OS217 / ATCC BAA-1090 / DSM 15013)).